We begin with the raw amino-acid sequence, 852 residues long: Envelope glycoprotein gp160 (852 aa).

Positions 1-32 (MRVKGIKKNYQHLWRWGGMMLLGILMICSATD) are cleaved as a signal peptide. The Extracellular segment spans residues 33–680 (KLWVTVYYGV…ITNWLWYIKI (648 aa)). N-linked (GlcNAc...) asparagine; by host glycosylation is present at Asn49. A disulfide bond links Cys54 and Cys74. Asn88, Asn135, Asn138, Asn154, Asn158, Asn197, Asn234, Asn241, Asn262, Asn276, Asn289, Asn295, Asn301, Asn331, Asn354, and Asn360 each carry an N-linked (GlcNAc...) asparagine; by host glycan. 5 disulfides stabilise this stretch: Cys119–Cys205, Cys126–Cys196, Cys131–Cys155, Cys218–Cys247, and Cys228–Cys239. The V1 stretch occupies residues 131 to 154 (CHDFNATNATSNSGKMMEGGEMKN). Positions 155 to 196 (CSFNITTSIRDKMQKEYALFYKLDIVPIDNDKTNTRYRLISC) are V2. Residues 296 to 329 (CTRPNNNTRKRITMGPGRVYYTTGQIIGDIRRAH) are V3. A disulfide bridge links Cys296 with Cys330. Positions 362–372 (SSGGDPEIVMH) are CD4-binding loop. 2 cysteine pairs are disulfide-bonded: Cys376-Cys439 and Cys383-Cys412. The V4 stretch occupies residues 383-412 (CNTTQLFNSTWYRNTTGNITEGNSPITLPC). N-linked (GlcNAc...) asparagine; by host glycans are attached at residues Asn384, Asn390, Asn396, Asn400, Asn442, and Asn456. V5 regions lie at residues 454 to 467 (NNNETTDTEIFRPG) and 457 to 467 (ETTDTEIFRPG). Residues 508-528 (AVGLGALFLGFLGAAGSTMGA) form a fusion peptide region. Residues 570–588 (KQLQARVLAVERYLKDQQL) form an immunosuppression region. Cysteines 594 and 600 form a disulfide. Asn607, Asn612, Asn621, Asn633, and Asn670 each carry an N-linked (GlcNAc...) asparagine; by host glycan. The stretch at 629 to 663 (REIDNYTNLIYSLIEDSQIQQEKNEKELLELDKWA) forms a coiled coil. The segment at 658–679 (ELDKWASLWNWFNITNWLWYIK) is MPER; binding to GalCer. Residues 681-701 (FIMIVGGLIGLRIVFAVLSIV) traverse the membrane as a helical segment. The Cytoplasmic portion of the chain corresponds to 702 to 852 (NRVRQGYSPL…IRQGLERALQ (151 aa)). The short motif at 708 to 711 (YSPL) is the YXXL motif; contains endocytosis signal element. Residues 715-741 (TRLPGRRGPDRPEGIEEEGGERDRDRS) are disordered.

Belongs to the HIV-1 env protein family. The mature envelope protein (Env) consists of a homotrimer of non-covalently associated gp120-gp41 heterodimers. The resulting complex protrudes from the virus surface as a spike. There seems to be as few as 10 spikes on the average virion. Interacts with host CD4, CCR5 and CXCR4. Gp120 also interacts with the C-type lectins CD209/DC-SIGN and CLEC4M/DC-SIGNR (collectively referred to as DC-SIGN(R)). Gp120 and gp41 interact with GalCer. Gp120 interacts with host ITGA4/ITGB7 complex; on CD4+ T-cells, this interaction results in rapid activation of integrin ITGAL/LFA-1, which facilitates efficient cell-to-cell spreading of HIV-1. Gp120 interacts with cell-associated heparan sulfate; this interaction increases virus infectivity on permissive cells and may be involved in infection of CD4- cells. In terms of assembly, the mature envelope protein (Env) consists of a homotrimer of non-covalently associated gp120-gp41 heterodimers. The resulting complex protrudes from the virus surface as a spike. There seems to be as few as 10 spikes on the average virion. In terms of processing, highly glycosylated by host. The high number of glycan on the protein is reffered to as 'glycan shield' because it contributes to hide protein sequence from adaptive immune system. Post-translationally, palmitoylation of the transmembrane protein and of Env polyprotein (prior to its proteolytic cleavage) is essential for their association with host cell membrane lipid rafts. Palmitoylation is therefore required for envelope trafficking to classical lipid rafts, but not for viral replication. Specific enzymatic cleavages in vivo yield mature proteins. Envelope glycoproteins are synthesized as an inactive precursor that is heavily N-glycosylated and processed likely by host cell furin in the Golgi to yield the mature SU and TM proteins. The cleavage site between SU and TM requires the minimal sequence [KR]-X-[KR]-R. About 2 of the 9 disulfide bonds of gp41 are reduced by P4HB/PDI, following binding to CD4 receptor.

It is found in the virion membrane. Its subcellular location is the host cell membrane. The protein resides in the host endosome membrane. In terms of biological role, oligomerizes in the host endoplasmic reticulum into predominantly trimers. In a second time, gp160 transits in the host Golgi, where glycosylation is completed. The precursor is then proteolytically cleaved in the trans-Golgi and thereby activated by cellular furin or furin-like proteases to produce gp120 and gp41. Attaches the virus to the host lymphoid cell by binding to the primary receptor CD4. This interaction induces a structural rearrangement creating a high affinity binding site for a chemokine coreceptor like CXCR4 and/or CCR5. Acts as a ligand for CD209/DC-SIGN and CLEC4M/DC-SIGNR, which are respectively found on dendritic cells (DCs), and on endothelial cells of liver sinusoids and lymph node sinuses. These interactions allow capture of viral particles at mucosal surfaces by these cells and subsequent transmission to permissive cells. HIV subverts the migration properties of dendritic cells to gain access to CD4+ T-cells in lymph nodes. Virus transmission to permissive T-cells occurs either in trans (without DCs infection, through viral capture and transmission), or in cis (following DCs productive infection, through the usual CD4-gp120 interaction), thereby inducing a robust infection. In trans infection, bound virions remain infectious over days and it is proposed that they are not degraded, but protected in non-lysosomal acidic organelles within the DCs close to the cell membrane thus contributing to the viral infectious potential during DCs' migration from the periphery to the lymphoid tissues. On arrival at lymphoid tissues, intact virions recycle back to DCs' cell surface allowing virus transmission to CD4+ T-cells. Functionally, acts as a class I viral fusion protein. Under the current model, the protein has at least 3 conformational states: pre-fusion native state, pre-hairpin intermediate state, and post-fusion hairpin state. During fusion of viral and target intracellular membranes, the coiled coil regions (heptad repeats) assume a trimer-of-hairpins structure, positioning the fusion peptide in close proximity to the C-terminal region of the ectodomain. The formation of this structure appears to drive apposition and subsequent fusion of viral and target cell membranes. Complete fusion occurs in host cell endosomes and is dynamin-dependent, however some lipid transfer might occur at the plasma membrane. The virus undergoes clathrin-dependent internalization long before endosomal fusion, thus minimizing the surface exposure of conserved viral epitopes during fusion and reducing the efficacy of inhibitors targeting these epitopes. Membranes fusion leads to delivery of the nucleocapsid into the cytoplasm. This Human immunodeficiency virus type 1 group M subtype B (isolate BRVA) (HIV-1) protein is Envelope glycoprotein gp160.